We begin with the raw amino-acid sequence, 156 residues long: Cyclic pyranopterin monophosphate synthase (156 aa).

Residues 73-75 and 110-111 contribute to the substrate site; these read LCH and ME. Aspartate 125 is a catalytic residue.

The protein belongs to the MoaC family. Homohexamer; trimer of dimers.

The catalysed reaction is (8S)-3',8-cyclo-7,8-dihydroguanosine 5'-triphosphate = cyclic pyranopterin phosphate + diphosphate. The protein operates within cofactor biosynthesis; molybdopterin biosynthesis. Functionally, catalyzes the conversion of (8S)-3',8-cyclo-7,8-dihydroguanosine 5'-triphosphate to cyclic pyranopterin monophosphate (cPMP). This chain is Cyclic pyranopterin monophosphate synthase, found in Pseudomonas entomophila (strain L48).